A 245-amino-acid chain; its full sequence is PF03932 family protein CutC (245 aa).

It belongs to the CutC family.

It is found in the cytoplasm. The polypeptide is PF03932 family protein CutC (Sinorhizobium medicae (strain WSM419) (Ensifer medicae)).